The primary structure comprises 881 residues: Sodium/sulfate cotransporter 1 (881 aa).

The next 6 membrane-spanning stretches (helical) occupy residues 8-28 (GIVA…DWVG), 31-51 (ITFT…VTVA), 61-81 (GLLT…TGGL), 107-127 (MVLS…PILI), 140-160 (LLIP…IGTS), and 186-206 (IFDI…FILL). RCK C-terminal domains follow at residues 212–296 (LPGN…EYGL), 318–402 (VFSA…IKTN), 407–492 (LHAV…FPGL), and 498–584 (EQVD…DKSF). 6 consecutive transmembrane segments (helical) span residues 601-621 (MIIG…GGLK), 625-645 (YIHL…TGCM), 658-678 (VYLT…TGVA), 684-704 (AIIS…AIYI), 775-795 (FAIV…FILV), and 803-823 (VWIV…LYFL). Positions 854 to 881 (SLRRQVSHTRTDDSGSSGSPLPAPKIVA) are disordered.

Belongs to the divalent anion:Na+ symporter (DASS) superfamily. Na+/sulfate symporter (TC 2.A.47.4) family.

Its subcellular location is the cell membrane. In terms of biological role, na(+)/sulfate cotransporter with a probable high-affinity for sulfate and a proteasome dependent turnover. The sequence is that of Sodium/sulfate cotransporter 1 (SLT1) from Chlamydomonas reinhardtii (Chlamydomonas smithii).